A 212-amino-acid polypeptide reads, in one-letter code: Probable GTP-binding protein EngB (212 aa).

One can recognise an EngB-type G domain in the interval 22 to 212; the sequence is GVSEFAFFGR…NILSLIAKRI (191 aa). Residues 30–37, 57–61, 95–98, 162–165, and 192–195 each bind GTP; these read GRSNAGKS, GMTRE, DLPG, TKAD, and ISSA. Residues Ser-37 and Thr-59 each contribute to the Mg(2+) site.

The protein belongs to the TRAFAC class TrmE-Era-EngA-EngB-Septin-like GTPase superfamily. EngB GTPase family. The cofactor is Mg(2+).

Its function is as follows. Necessary for normal cell division and for the maintenance of normal septation. In Treponema denticola (strain ATCC 35405 / DSM 14222 / CIP 103919 / JCM 8153 / KCTC 15104), this protein is Probable GTP-binding protein EngB.